We begin with the raw amino-acid sequence, 469 residues long: Uronate isomerase (469 aa).

This sequence belongs to the metallo-dependent hydrolases superfamily. Uronate isomerase family.

The enzyme catalyses D-glucuronate = D-fructuronate. It carries out the reaction aldehydo-D-galacturonate = keto-D-tagaturonate. The protein operates within carbohydrate metabolism; pentose and glucuronate interconversion. The sequence is that of Uronate isomerase from Rhizobium meliloti (strain 1021) (Ensifer meliloti).